A 103-amino-acid chain; its full sequence is Truncated secreted TNF-receptor-like protein A53R (103 aa).

One copy of the TNFR-Cys 1 repeat lies at 36 to 73; it reads SCDKGEYLDKRHNQCCNRCPPGEFAKVRCNGNDNTKCE. 3 disulfide bridges follow: Cys37–Cys50, Cys51–Cys64, and Cys54–Cys72. One copy of the TNFR-Cys 2; truncated repeat lies at 74–103; sequence RCPPHTYTTIPIILMDVINVENAQPDHLIR.

Belongs to the poxviridae A53R protein family.

In Vaccinia virus (strain Western Reserve) (VACV), this protein is Truncated secreted TNF-receptor-like protein A53R.